A 512-amino-acid chain; its full sequence is Serine/threonine-protein kinase BSK1 (512 aa).

Glycine 2 carries N-myristoyl glycine lipidation. The interval 8-48 (FSGDNPLGKDGVQPQPLSQNNHGGATTADNGGSGGASGVGG) is disordered. Over residues 38–48 (GGSGGASGVGG) the composition is skewed to gly residues. In terms of domain architecture, Protein kinase spans 76 to 331 (DNIVSESGEK…DLVATLAPLQ (256 aa)). ATP is bound by residues 82–90 (SGEKAPNLV) and lysine 104. Aspartate 198 functions as the Proton acceptor in the catalytic mechanism. The residue at position 230 (serine 230) is a Phosphoserine. The stretch at 483 to 508 (AKLNMNTDAADMLNEAAQLEEKRQRG) forms a coiled coil.

The protein belongs to the protein kinase superfamily. Ser/Thr protein kinase family. In terms of assembly, interacts with BRI1. Interacts with ASK7/BIN2, BSK5, BSK6, BSK8 and BSK11. Interacts with FLS2. In terms of processing, phosphorylated at Ser-230 by BRI1 upon brassinolide (BL) treatment. Phosphorylation at Ser-230 weakens the interaction between BSK1 and BRI1. Phosphorylated by ASK7/BIN2 and ASK9/BIL2.

It localises to the cell membrane. It carries out the reaction L-seryl-[protein] + ATP = O-phospho-L-seryl-[protein] + ADP + H(+). The enzyme catalyses L-threonyl-[protein] + ATP = O-phospho-L-threonyl-[protein] + ADP + H(+). In terms of biological role, serine/threonine kinase that acts as a positive regulator of brassinosteroid (BR) signaling downstream of the receptor kinase BRI1. Mediates signal transduction from BRI1 by functioning as substrate of BRI1. Functions as a positive regulator of plant immunity. May be involved in the regulation of pattern-triggered immunity (PTI) downstream of the flagellin receptor FLS2. Possesses kinase activity in vitro. Kinase activity is required for its function in innate immunity. This is Serine/threonine-protein kinase BSK1 from Arabidopsis thaliana (Mouse-ear cress).